We begin with the raw amino-acid sequence, 94 residues long: Co-chaperonin GroES (94 aa).

The protein belongs to the GroES chaperonin family. As to quaternary structure, heptamer of 7 subunits arranged in a ring. Interacts with the chaperonin GroEL.

It localises to the cytoplasm. Its function is as follows. Together with the chaperonin GroEL, plays an essential role in assisting protein folding. The GroEL-GroES system forms a nano-cage that allows encapsulation of the non-native substrate proteins and provides a physical environment optimized to promote and accelerate protein folding. GroES binds to the apical surface of the GroEL ring, thereby capping the opening of the GroEL channel. This Caldanaerobacter subterraneus subsp. tengcongensis (strain DSM 15242 / JCM 11007 / NBRC 100824 / MB4) (Thermoanaerobacter tengcongensis) protein is Co-chaperonin GroES.